Here is a 139-residue protein sequence, read N- to C-terminus: Transcription antitermination protein NusB (139 aa).

This sequence belongs to the NusB family.

Involved in transcription antitermination. Required for transcription of ribosomal RNA (rRNA) genes. Binds specifically to the boxA antiterminator sequence of the ribosomal RNA (rrn) operons. The sequence is that of Transcription antitermination protein NusB from Pectobacterium carotovorum subsp. carotovorum (strain PC1).